A 1382-amino-acid polypeptide reads, in one-letter code: ABC-type transporter atr1 (1382 aa).

Over residues 1-12 (MRFRSDSRADHQ) the composition is skewed to basic and acidic residues. Positions 1–56 (MRFRSDSRADHQHPKKQGSMDPDTIQALKYQDRSSSSSSNNKPKEKVGSASTSPSP) are disordered. Asparagine 62 carries N-linked (GlcNAc...) asparagine glycosylation. The next 6 membrane-spanning stretches (helical) occupy residues 101–121 (LFGTGMAIAAGAAQPLMNIFI), 159–179 (LILLYLGIGMFFASMLYMAVF), 233–253 (LPMAIMYFSTFVTAAAVAFAF), 259–279 (LVLLPIAPLILLAGGVMGALT), 339–359 (GVGVGALLFIIYAGYALAFFY), and 374–394 (IVSVVFANFAGAFAIANLFSM). The ABC transmembrane type-1 1 domain occupies 101–400 (LFGTGMAIAA…LFSMIENFTM (300 aa)). Residue asparagine 397 is glycosylated (N-linked (GlcNAc...) asparagine). One can recognise an ABC transporter 1 domain in the interval 445–688 (LKLDHVHFAY…PNGTFASMLR (244 aa)). 480–487 (GLSGSGKS) is an ATP binding site. The N-linked (GlcNAc...) asparagine glycan is linked to asparagine 680. The segment at 738-768 (SVKPKDPSKNFEPPGESYASPAADGVKQDAP) is disordered. The 298-residue stretch at 797-1094 (LGSLCAAIIG…IFNYSADFSS (298 aa)) folds into the ABC transmembrane type-1 2 domain. The helical transmembrane segment at 800–820 (LCAAIIGAVYPVYAILFGTAI) threads the bilayer. N-linked (GlcNAc...) asparagine glycosylation is present at asparagine 827. A helical transmembrane segment spans residues 848-868 (ISSGSFFIVAVGCAFISFYHV). Residue asparagine 903 is glycosylated (N-linked (GlcNAc...) asparagine). The next 2 membrane-spanning stretches (helical) occupy residues 911 to 931 (SLSVLSQGIYGGVGPTLGSIV) and 951 to 973 (LALVVIASTPLTITAGLLRLRVL). N-linked (GlcNAc...) asparagine glycosylation is present at asparagine 1020. Transmembrane regions (helical) follow at residues 1034-1054 (VLFGLSQCVQLLVTALAFWYG) and 1067-1087 (GFFTILISVVYGSVQAGNIFN). The 242-residue stretch at 1136-1377 (IALKEVTFRY…DGLFALMARL (242 aa)) folds into the ABC transporter 2 domain. Residue 1171–1178 (GGSGSGKS) participates in ATP binding. N-linked (GlcNAc...) asparagine glycosylation occurs at asparagine 1324.

It belongs to the ABC transporter superfamily. ABCB family. Multidrug resistance exporter (TC 3.A.1.201) subfamily.

The protein localises to the cell membrane. In terms of biological role, ABC-type transporter; part of the gene cluster that mediates the biosynthesis of the glycolipid biosurfactant ustilagic acid (UA). UA is a secreted cellobiose glycolipid that is toxic for many microorganisms and confers biocontrol activity to U.maydis. Export of UA is presumably catalyzed by the ABC transporter atr1. Atr1 appears to be quite unspecific, as many of the UA derivatives produced by cluster mutant strains are readily exported. This Mycosarcoma maydis (Corn smut fungus) protein is ABC-type transporter atr1.